The chain runs to 457 residues: Allantoinase (457 aa).

Residues His-58, His-60, Lys-145, His-181, His-237, and Asp-310 each contribute to the Zn(2+) site. Position 145 is an N6-carboxylysine (Lys-145).

Belongs to the metallo-dependent hydrolases superfamily. Allantoinase family. As to quaternary structure, homotetramer. The cofactor is Zn(2+). In terms of processing, carboxylation allows a single lysine to coordinate two zinc ions.

The enzyme catalyses (S)-allantoin + H2O = allantoate + H(+). It participates in nitrogen metabolism; (S)-allantoin degradation; allantoate from (S)-allantoin: step 1/1. Its function is as follows. Catalyzes the conversion of allantoin (5-ureidohydantoin) to allantoic acid by hydrolytic cleavage of the five-member hydantoin ring. This Solibacter usitatus (strain Ellin6076) protein is Allantoinase.